The primary structure comprises 59 residues: UPF0391 membrane protein AZC_4184 (59 aa).

2 helical membrane passes run 4 to 24 and 30 to 50; these read WALTFLVVAIIAAVLGFTAVA and IAKIIFYVAIVLFLISAVMGF.

The protein belongs to the UPF0391 family.

The protein localises to the cell membrane. The polypeptide is UPF0391 membrane protein AZC_4184 (Azorhizobium caulinodans (strain ATCC 43989 / DSM 5975 / JCM 20966 / LMG 6465 / NBRC 14845 / NCIMB 13405 / ORS 571)).